The chain runs to 249 residues: MVRYKATISYDGTLFSGFQRQRHLRTVQEEIEKTLYKLNNGTKIIIHGAGRTDAGVHAYGQVIHFDLPQEQEVEKLRFALDTQTPEDIDVVNIEKVADDFHCRYQKHLKTYEFLVDNGRPKNPMMRHYTTHYPYTLNIKLMQEAINGLVGTHDFTGFTAAGTSVQNKVRTITKATVSRDEKTDFLVFTFSGNGFLYKQVRNMVGTLLKIGNGQMPVEQVKVILSSKNRQLAGPTISGNGLYLKEICYEN.

The active-site Nucleophile is the D53. A substrate-binding site is contributed by Y111.

This sequence belongs to the tRNA pseudouridine synthase TruA family. In terms of assembly, homodimer.

The catalysed reaction is uridine(38/39/40) in tRNA = pseudouridine(38/39/40) in tRNA. Formation of pseudouridine at positions 38, 39 and 40 in the anticodon stem and loop of transfer RNAs. The protein is tRNA pseudouridine synthase A of Streptococcus pyogenes serotype M1.